Reading from the N-terminus, the 309-residue chain is Ribosomal RNA small subunit methyltransferase H (309 aa).

S-adenosyl-L-methionine is bound by residues 33–35 (GGH), Asp53, Phe79, Asp100, and Gln107.

The protein belongs to the methyltransferase superfamily. RsmH family.

It is found in the cytoplasm. It catalyses the reaction cytidine(1402) in 16S rRNA + S-adenosyl-L-methionine = N(4)-methylcytidine(1402) in 16S rRNA + S-adenosyl-L-homocysteine + H(+). In terms of biological role, specifically methylates the N4 position of cytidine in position 1402 (C1402) of 16S rRNA. The polypeptide is Ribosomal RNA small subunit methyltransferase H (Clostridium botulinum (strain Loch Maree / Type A3)).